Reading from the N-terminus, the 664-residue chain is Glycine--tRNA ligase beta subunit (664 aa).

Belongs to the class-II aminoacyl-tRNA synthetase family. Tetramer of two alpha and two beta subunits.

The protein localises to the cytoplasm. The catalysed reaction is tRNA(Gly) + glycine + ATP = glycyl-tRNA(Gly) + AMP + diphosphate. The chain is Glycine--tRNA ligase beta subunit from Rickettsia conorii (strain ATCC VR-613 / Malish 7).